The sequence spans 174 residues: Ribosome rescue factor SmrB (174 aa).

One can recognise a Smr domain in the interval 96-171 (LDLHGLTQQQ…GDAAILVLIE (76 aa)).

This sequence belongs to the SmrB family. Associates with collided ribosomes, but not with correctly translating polysomes.

Its function is as follows. Acts as a ribosome collision sensor. Detects stalled/collided disomes (pairs of ribosomes where the leading ribosome is stalled and a second ribosome has collided with it) and endonucleolytically cleaves mRNA at the 5' boundary of the stalled ribosome. Stalled/collided disomes form a new interface (primarily via the 30S subunits) that binds SmrB. Cleaved mRNA becomes available for tmRNA ligation, leading to ribosomal subunit dissociation and rescue of stalled ribosomes. The protein is Ribosome rescue factor SmrB of Tolumonas auensis (strain DSM 9187 / NBRC 110442 / TA 4).